The primary structure comprises 187 residues: UPF0301 protein KPN78578_33170 (187 aa).

This sequence belongs to the UPF0301 (AlgH) family.

This chain is UPF0301 protein KPN78578_33170, found in Klebsiella pneumoniae subsp. pneumoniae (strain ATCC 700721 / MGH 78578).